The sequence spans 189 residues: FUN14 domain-containing protein 2 (189 aa).

The Cytoplasmic segment spans residues 1-80 (METSAPRAGS…GQESGPSAEK (80 aa)). Ser10 and Ser53 each carry phosphoserine. Residues 81 to 101 (YSVATQLFIGGVTGWCTGFIF) form a helical membrane-spanning segment. Residues 102 to 107 (QKVGKL) are Mitochondrial intermembrane-facing. A helical transmembrane segment spans residues 108-128 (AATAVGGGFFLLQLANHTGYI). The Cytoplasmic portion of the chain corresponds to 129–164 (KVDWQRVEKDMKKAKEQLKIRKSNQIPTEVRSKAEE). Ser151 is subject to Phosphoserine. A helical membrane pass occupies residues 165–185 (VVSFVKKNVLVTGGFFGGFLL). Residues 186-189 (GMAS) lie on the Mitochondrial intermembrane side of the membrane.

The protein belongs to the FUN14 family. Highly expressed in platelets (at protein level).

The protein localises to the mitochondrion outer membrane. The protein resides in the nucleus. In terms of biological role, binds directly and specifically 1,2-Diacyl-sn-glycero-3-phospho-(1'-myo-inositol-3',4',5'-bisphosphate) (PIP3) leading to the recruitment of PIP3 to mitochondria and may play a role in the regulation of the platelet activation via AKT/GSK3B/cGMP signaling pathways. May act as transcription factor that regulates SREBP1 (isoform SREBP-1C) expression in order to modulate triglyceride (TG) homeostasis in hepatocytes. In Homo sapiens (Human), this protein is FUN14 domain-containing protein 2.